The sequence spans 523 residues: GMP synthase [glutamine-hydrolyzing] (523 aa).

One can recognise a Glutamine amidotransferase type-1 domain in the interval 8-205; the sequence is RILILDFGSQ…IRELCECEAL (198 aa). Catalysis depends on Cys-85, which acts as the Nucleophile. Active-site residues include His-179 and Glu-181. One can recognise a GMPS ATP-PPase domain in the interval 206-398; it reads WTPSNIISDA…LGLPYDMVYR (193 aa). 233 to 239 lines the ATP pocket; sequence SGGVDSS.

As to quaternary structure, homodimer.

It catalyses the reaction XMP + L-glutamine + ATP + H2O = GMP + L-glutamate + AMP + diphosphate + 2 H(+). It participates in purine metabolism; GMP biosynthesis; GMP from XMP (L-Gln route): step 1/1. Functionally, catalyzes the synthesis of GMP from XMP. The chain is GMP synthase [glutamine-hydrolyzing] from Alcanivorax borkumensis (strain ATCC 700651 / DSM 11573 / NCIMB 13689 / SK2).